The chain runs to 127 residues: Holo-[acyl-carrier-protein] synthase (127 aa).

2 residues coordinate Mg(2+): aspartate 8 and glutamate 57.

The protein belongs to the P-Pant transferase superfamily. AcpS family. It depends on Mg(2+) as a cofactor.

Its subcellular location is the cytoplasm. It catalyses the reaction apo-[ACP] + CoA = holo-[ACP] + adenosine 3',5'-bisphosphate + H(+). Transfers the 4'-phosphopantetheine moiety from coenzyme A to a Ser of acyl-carrier-protein. This is Holo-[acyl-carrier-protein] synthase from Hydrogenovibrio crunogenus (strain DSM 25203 / XCL-2) (Thiomicrospira crunogena).